Reading from the N-terminus, the 44-residue chain is Antibacterial protein 2 homolog (44 aa).

Belongs to the staphylococcal hemolytic protein family.

Its subcellular location is the secreted. Functionally, has hemolytic activity and also inhibits the growth of gonococci. The chain is Antibacterial protein 2 homolog from Staphylococcus haemolyticus (strain JCSC1435).